The sequence spans 156 residues: Keratin-associated protein 13-4 (156 aa).

4 tandem repeats follow at residues 37-46 (CQLGSSLYRN), 47-56 (CQKTCWEPTS), 57-66 (CRKSCYRRRT), and 73-82 (CQTTCSRSLG). The tract at residues 37–82 (CQLGSSLYRNCQKTCWEPTSCRKSCYRRRTSMLCSPCQTTCSRSLG) is 4 X 10 AA approximate repeats.

Belongs to the PMG family. Interacts with hair keratins.

Functionally, in the hair cortex, hair keratin intermediate filaments are embedded in an interfilamentous matrix, consisting of hair keratin-associated proteins (KRTAP), which are essential for the formation of a rigid and resistant hair shaft through their extensive disulfide bond cross-linking with abundant cysteine residues of hair keratins. The matrix proteins include the high-sulfur and high-glycine-tyrosine keratins. This chain is Keratin-associated protein 13-4 (KRTAP13-4), found in Macaca fascicularis (Crab-eating macaque).